The chain runs to 606 residues: 4-hydroxy-3-methylbut-2-en-1-yl diphosphate synthase (flavodoxin) (606 aa).

[4Fe-4S] cluster-binding residues include C513, C516, C547, and E554.

This sequence belongs to the IspG family. [4Fe-4S] cluster serves as cofactor.

The catalysed reaction is (2E)-4-hydroxy-3-methylbut-2-enyl diphosphate + oxidized [flavodoxin] + H2O + 2 H(+) = 2-C-methyl-D-erythritol 2,4-cyclic diphosphate + reduced [flavodoxin]. Its pathway is isoprenoid biosynthesis; isopentenyl diphosphate biosynthesis via DXP pathway; isopentenyl diphosphate from 1-deoxy-D-xylulose 5-phosphate: step 5/6. Functionally, converts 2C-methyl-D-erythritol 2,4-cyclodiphosphate (ME-2,4cPP) into 1-hydroxy-2-methyl-2-(E)-butenyl 4-diphosphate. The protein is 4-hydroxy-3-methylbut-2-en-1-yl diphosphate synthase (flavodoxin) of Chlamydia felis (strain Fe/C-56) (Chlamydophila felis).